A 343-amino-acid polypeptide reads, in one-letter code: 4-hydroxy-2-oxovalerate aldolase 2 (343 aa).

The 251-residue stretch at 5-255 folds into the Pyruvate carboxyltransferase domain; the sequence is ITIVDTTLRD…DTGVDLFPLI (251 aa). Substrate is bound by residues 13–14, Ser-167, and His-194; that span reads RD. Position 14 (Asp-14) interacts with Mn(2+). Mn(2+)-binding residues include His-194 and His-196. Residue Tyr-285 coordinates substrate.

Belongs to the 4-hydroxy-2-oxovalerate aldolase family.

It catalyses the reaction (S)-4-hydroxy-2-oxopentanoate = acetaldehyde + pyruvate. The sequence is that of 4-hydroxy-2-oxovalerate aldolase 2 from Rhodococcus jostii (strain RHA1).